The following is a 165-amino-acid chain: Transcription elongation factor GreA (165 aa).

Residues 55-78 (AAKEEQGKQELRVRQLTQLLENAK) adopt a coiled-coil conformation.

It belongs to the GreA/GreB family.

Functionally, necessary for efficient RNA polymerase transcription elongation past template-encoded arresting sites. The arresting sites in DNA have the property of trapping a certain fraction of elongating RNA polymerases that pass through, resulting in locked ternary complexes. Cleavage of the nascent transcript by cleavage factors such as GreA or GreB allows the resumption of elongation from the new 3'terminus. GreA releases sequences of 2 to 3 nucleotides. In Streptomyces avermitilis (strain ATCC 31267 / DSM 46492 / JCM 5070 / NBRC 14893 / NCIMB 12804 / NRRL 8165 / MA-4680), this protein is Transcription elongation factor GreA.